Reading from the N-terminus, the 952-residue chain is Chaperone protein ClpC2, chloroplastic (952 aa).

The transit peptide at Met1–Gln45 directs the protein to the chloroplast. In terms of domain architecture, Clp R spans Phe115–Glu257. Repeat regions lie at residues Phe118–Gly183 and Phe193–Glu257. An i region spans residues Leu278–Pro525. Gly323–Thr330 is an ATP binding site. Residues Glu532–Glu567 enclose the UVR domain. An II region spans residues Val592–Ser783. ATP is bound at residue Gly666–Ser673.

The protein belongs to the ClpA/ClpB family. ClpC subfamily. As to quaternary structure, homodimer and homohexamer. Hexamerization upon addition of ATP. Interacts with CLPT1. Interacts with CLPS1. Stably associated with the import machinery. Interacts with CLPF. Mg(2+) is required as a cofactor. In terms of tissue distribution, expressed at low levels in roots and inflorescences. Expressed at very low levels in rosette leaves. Expressed in photosynthetic green tissues with high levels in young, developing leaf tissues.

The protein resides in the plastid. Its subcellular location is the chloroplast stroma. The protein localises to the chloroplast membrane. It catalyses the reaction ATP + H2O = ADP + phosphate + H(+). In terms of biological role, molecular chaperone. May act as a suppressor of FtsH-mediated thylakoid membrane biogenesis and may enhance photoinhibition. Seems not involved in chloroplastic protein import. Probable component of the TIC-associated stromal import motor involved in inner membrane translocation. Has an ATPase activity, but no ADPase activity. Interacts with transit peptides with a positional preference. Localization of the signal sequence at the N-terminal end of a protein seems mandatory for interaction to take place. The chain is Chaperone protein ClpC2, chloroplastic from Arabidopsis thaliana (Mouse-ear cress).